Reading from the N-terminus, the 419-residue chain is UDP-N-acetylglucosamine 1-carboxyvinyltransferase (419 aa).

22–23 (KN) contributes to the phosphoenolpyruvate binding site. Residue R91 participates in UDP-N-acetyl-alpha-D-glucosamine binding. The Proton donor role is filled by C115. Position 115 is a 2-(S-cysteinyl)pyruvic acid O-phosphothioketal (C115). UDP-N-acetyl-alpha-D-glucosamine is bound by residues 120 to 124 (RPVDL), 160 to 163 (KVSV), D305, and V327.

This sequence belongs to the EPSP synthase family. MurA subfamily.

The protein resides in the cytoplasm. The catalysed reaction is phosphoenolpyruvate + UDP-N-acetyl-alpha-D-glucosamine = UDP-N-acetyl-3-O-(1-carboxyvinyl)-alpha-D-glucosamine + phosphate. It participates in cell wall biogenesis; peptidoglycan biosynthesis. Functionally, cell wall formation. Adds enolpyruvyl to UDP-N-acetylglucosamine. The sequence is that of UDP-N-acetylglucosamine 1-carboxyvinyltransferase from Escherichia coli O157:H7.